The sequence spans 108 residues: Cell division protein FtsL (108 aa).

The Cytoplasmic portion of the chain corresponds to 1-24; it reads MSKDTASQPSLTKLIGLDIFGVGR. The chain crosses the membrane as a helical span at residues 25-45; the sequence is LHAILLICIFLSAIGVVLATH. Topologically, residues 46–108 are periplasmic; sequence NTRQMTVQRE…PDKEVIIKLR (63 aa).

The protein belongs to the FtsL family. In terms of assembly, part of a complex composed of FtsB, FtsL and FtsQ.

It localises to the cell inner membrane. Its function is as follows. Essential cell division protein. May link together the upstream cell division proteins, which are predominantly cytoplasmic, with the downstream cell division proteins, which are predominantly periplasmic. This chain is Cell division protein FtsL, found in Aliivibrio fischeri (strain ATCC 700601 / ES114) (Vibrio fischeri).